Reading from the N-terminus, the 519-residue chain is 2,3-bisphosphoglycerate-independent phosphoglycerate mutase (519 aa).

2 residues coordinate Mn(2+): aspartate 18 and serine 68. Serine 68 functions as the Phosphoserine intermediate in the catalytic mechanism. Substrate is bound by residues histidine 129, 159 to 160 (RD), arginine 191, arginine 197, 267 to 270 (RADR), and lysine 341. Mn(2+) contacts are provided by aspartate 408, histidine 412, aspartate 449, histidine 450, and histidine 468.

This sequence belongs to the BPG-independent phosphoglycerate mutase family. Monomer. The cofactor is Mn(2+).

The enzyme catalyses (2R)-2-phosphoglycerate = (2R)-3-phosphoglycerate. It participates in carbohydrate degradation; glycolysis; pyruvate from D-glyceraldehyde 3-phosphate: step 3/5. Its function is as follows. Catalyzes the interconversion of 2-phosphoglycerate and 3-phosphoglycerate. This Coxiella burnetii (strain RSA 331 / Henzerling II) protein is 2,3-bisphosphoglycerate-independent phosphoglycerate mutase.